A 701-amino-acid polypeptide reads, in one-letter code: Methionine--tRNA ligase (701 aa).

The 'HIGH' region signature appears at 13–23; sequence PYANGSIHLGH. Zn(2+)-binding residues include cysteine 144, cysteine 147, cysteine 157, and cysteine 160. The 'KMSKS' region signature appears at 336-340; it reads KMSKS. Residue lysine 339 coordinates ATP. The 102-residue stretch at 600–701 folds into the tRNA-binding domain; sequence DFSKIDLRIA…SGAQPGMRVK (102 aa).

Belongs to the class-I aminoacyl-tRNA synthetase family. MetG type 1 subfamily. In terms of assembly, homodimer. Zn(2+) is required as a cofactor.

Its subcellular location is the cytoplasm. The catalysed reaction is tRNA(Met) + L-methionine + ATP = L-methionyl-tRNA(Met) + AMP + diphosphate. Is required not only for elongation of protein synthesis but also for the initiation of all mRNA translation through initiator tRNA(fMet) aminoacylation. The sequence is that of Methionine--tRNA ligase from Nitrosomonas eutropha (strain DSM 101675 / C91 / Nm57).